A 172-amino-acid chain; its full sequence is Adenine phosphoribosyltransferase (172 aa).

This sequence belongs to the purine/pyrimidine phosphoribosyltransferase family. As to quaternary structure, homodimer.

Its subcellular location is the cytoplasm. It catalyses the reaction AMP + diphosphate = 5-phospho-alpha-D-ribose 1-diphosphate + adenine. It functions in the pathway purine metabolism; AMP biosynthesis via salvage pathway; AMP from adenine: step 1/1. Its function is as follows. Catalyzes a salvage reaction resulting in the formation of AMP, that is energically less costly than de novo synthesis. This is Adenine phosphoribosyltransferase from Staphylococcus epidermidis (strain ATCC 35984 / DSM 28319 / BCRC 17069 / CCUG 31568 / BM 3577 / RP62A).